The following is a 488-amino-acid chain: MAEAKPRNLRIVMFPFMGQGHIIPFVALALRLEKIMIMNRANKTTISMINTPSNIPKIRSNLPPESSISLIELPFNSSDHGLPHDGENFDSLPYSLVISLLEASRSLREPFRDFMTKILKEEGQSSVIVIGDFFLGWIGKVCKEVGVYSVIFSASGAFGLGCYRSIWLNLPHKETKQDQFLLDDFPEAGEIEKTQLNSFMLEADGTDDWSVFMKKIIPGWSDFDGFLFNTVAEIDQMGLSYFRRITGVPVWPVGPVLKSPDKKVGSRSTEEAVKSWLDSKPDHSVVYVCFGSMNSILQTHMLELAMALESSEKNFIWVVRPPIGVEVKSEFDVKGYLPEGFEERITRSERGLLVKKWAPQVDILSHKATCVFLSHCGWNSILESLSHGVPLLGWPMAAEQFFNSILMEKHIGVSVEVARGKRCEIKCDDIVSKIKLVMEETEVGKEIRKKAREVKELVRRAMVDGVKGSSVIGLEEFLDQAMVKKVEN.

Residues serine 292, 358 to 360, 375 to 383, and 397 to 400 contribute to the UDP-alpha-D-glucose site; these read APQ, HCGWNSILE, and AAEQ.

Belongs to the UDP-glycosyltransferase family.

The chain is UDP-glycosyltransferase 92A1 (UGT92A1) from Arabidopsis thaliana (Mouse-ear cress).